A 346-amino-acid polypeptide reads, in one-letter code: uncharacterized protein (346 aa).

Residues A7–V27 form a helical membrane-spanning segment. The tract at residues E29 to K48 is disordered. Residues S35 to A44 show a composition bias toward polar residues. Residues L231 to F342 enclose the SCP domain.

The protein resides in the cell membrane. This is an uncharacterized protein from Bacillus subtilis (strain 168).